The sequence spans 599 residues: Putative sensor histidine kinase NtrY-like (599 aa).

4 helical membrane-spanning segments follow: residues 17-37 (ILIL…FYVI), 44-64 (FSTI…LGIL), 85-105 (IVIA…VFSV), and 285-305 (IMFI…GVLF). One can recognise an HAMP domain in the interval 307 to 361 (AQIVKPIKKLVTATDKVKDGDLTVQVPENEVDKDEIGTLYVAFNRMIKQLSRQQR). The 212-residue stretch at 378–589 (KVAHEIKNPL…IIDIKFDLKE (212 aa)) folds into the Histidine kinase domain. Histidine 381 carries the post-translational modification Phosphohistidine; by autocatalysis.

It localises to the cell membrane. It catalyses the reaction ATP + protein L-histidine = ADP + protein N-phospho-L-histidine.. Functionally, member of the two-component regulatory system RT0603/RT0550. The protein is Putative sensor histidine kinase NtrY-like of Rickettsia typhi (strain ATCC VR-144 / Wilmington).